The following is a 423-amino-acid chain: Serine--tRNA ligase 1 (423 aa).

231–233 (TAE) serves as a coordination point for L-serine. 262–264 (RSE) serves as a coordination point for ATP. An L-serine-binding site is contributed by E285. 349-352 (EISS) contacts ATP. An L-serine-binding site is contributed by S384.

The protein belongs to the class-II aminoacyl-tRNA synthetase family. Type-1 seryl-tRNA synthetase subfamily. Homodimer. The tRNA molecule binds across the dimer.

Its subcellular location is the cytoplasm. The catalysed reaction is tRNA(Ser) + L-serine + ATP = L-seryl-tRNA(Ser) + AMP + diphosphate + H(+). The enzyme catalyses tRNA(Sec) + L-serine + ATP = L-seryl-tRNA(Sec) + AMP + diphosphate + H(+). It participates in aminoacyl-tRNA biosynthesis; selenocysteinyl-tRNA(Sec) biosynthesis; L-seryl-tRNA(Sec) from L-serine and tRNA(Sec): step 1/1. Functionally, catalyzes the attachment of serine to tRNA(Ser). Is also able to aminoacylate tRNA(Sec) with serine, to form the misacylated tRNA L-seryl-tRNA(Sec), which will be further converted into selenocysteinyl-tRNA(Sec). The polypeptide is Serine--tRNA ligase 1 (Enterococcus faecalis (strain ATCC 700802 / V583)).